We begin with the raw amino-acid sequence, 1086 residues long: WD repeat-containing protein 64 (1086 aa).

9 WD repeats span residues 129 to 168, 170 to 199, 321 to 360, 364 to 403, 411 to 448, 453 to 492, 498 to 537, 560 to 602, and 642 to 683; these read RRRD…WITG, DYLG…SSQE, AMPR…KPVG, GHMF…VLQV, PGDM…QDTK, THER…QIYQ, GLSI…EMKM, QVKQ…PYLQ, and IVDV…VKEI. The disordered stretch occupies residues 724–749; that stretch reads ICSSTQCDSSKGPQSSKGSKQSIHDA. Residues 732 to 744 are compositionally biased toward low complexity; sequence SSKGPQSSKGSKQ. WD repeat units lie at residues 765–806, 809–850, and 863–902; these read ASRK…KDML, TKHS…DPPH, and AHSL…YCGY. The tract at residues 1047–1069 is disordered; it reads DKVKREEAPEMTEGSRRKSLKRN. Residues 1049–1062 are compositionally biased toward basic and acidic residues; it reads VKREEAPEMTEGSR.

The polypeptide is WD repeat-containing protein 64 (Wdr64) (Mus musculus (Mouse)).